Here is a 1773-residue protein sequence, read N- to C-terminus: Plexin-2 (1773 aa).

The first 19 residues, 1–19, serve as a signal peptide directing secretion; sequence MLFIESAFLVLTSLSAAEA. A Sema domain is found at 20–436; sequence ATPFEGGVKQ…MPYGIVMEEL (417 aa). Residues 20-1130 lie on the Extracellular side of the membrane; it reads ATPFEGGVKQ…SDHALPSRLS (1111 aa). N-linked (GlcNAc...) asparagine glycosylation occurs at Asn-65. 9 disulfide bridges follow: Cys-83-Cys-90, Cys-117-Cys-125, Cys-239-Cys-341, Cys-255-Cys-292, Cys-310-Cys-328, Cys-439-Cys-456, Cys-445-Cys-479, Cys-448-Cys-465, and Cys-459-Cys-471. A glycan (N-linked (GlcNAc...) asparagine) is linked at Asn-241. The 43-residue stretch at 438–480 folds into the PSI 1 domain; the sequence is TCAHHESCTDCQVSVDPLCQWCHPTQSCTTSSRCSGPLTTQCP. N-linked (GlcNAc...) asparagine glycosylation is present at Asn-494. Cys-516 and Cys-538 form a disulfide bridge. Residue Asn-566 is glycosylated (N-linked (GlcNAc...) asparagine). A PSI 2 domain is found at 571–608; that stretch reads DCAGYSTCSTCMSSEFGCQWCSHKCSSSCGSASAKACV. Residues Asn-670 and Asn-693 are each glycosylated (N-linked (GlcNAc...) asparagine). The PSI 3 domain occupies 698 to 739; it reads SCSNLAADCSSCLALSPSLSCGWCNRKCSHECHESKATAVCD. IPT/TIG domains are found at residues 741–829, 831–916, and 919–1006; these read PKID…FSFV, VSIF…FEYR, and PSVN…FLMD. N-linked (GlcNAc...) asparagine glycans are attached at residues Asn-855, Asn-877, Asn-975, and Asn-1007. A helical transmembrane segment spans residues 1131–1151; that stretch reads FLILGLLLFTVITLIVMCLIF. Positions 1150-1188 form a coiled coil; sequence IFKRRRQEREKEYRKIQLQMENLENNVRKECKQAFAELQ. The Cytoplasmic segment spans residues 1152–1764; that stretch reads KRRRQEREKE…LHVCLETDNH (613 aa).

Belongs to the plexin family. Interacts with mab-20.

The protein resides in the cell membrane. Its function is as follows. Involved as a receptor for mab-20/sema-2a in the formation or stabilization of cell-cell contacts at several stages of epithelial morphogenesis. In early embryonic development, required for proper ventral closure of the epidermis. During male tail morphogenesis, involved in precursor cell sorting and in the formation of distinct sensory rays. Involved in axon guidance of SDQL neurons during neurogenesis. The protein is Plexin-2 (plx-2) of Caenorhabditis briggsae.